The sequence spans 367 residues: D-alanine--D-alanine ligase (367 aa).

The 202-residue stretch at 139–340 (KLILKEKNIP…FSQVIDNMIS (202 aa)) folds into the ATP-grasp domain. Position 169-224 (169-224 (KEVLEYPMIVKPARLGSSIGVKKVNDKCELEEAIETAFSFDDKVIVEKWIDSRELN)) interacts with ATP. Residues Asp298, Glu311, and Asn313 each coordinate Mg(2+).

Belongs to the D-alanine--D-alanine ligase family. Requires Mg(2+) as cofactor. The cofactor is Mn(2+).

The protein resides in the cytoplasm. It catalyses the reaction 2 D-alanine + ATP = D-alanyl-D-alanine + ADP + phosphate + H(+). Its pathway is cell wall biogenesis; peptidoglycan biosynthesis. Its function is as follows. Cell wall formation. This chain is D-alanine--D-alanine ligase, found in Thermosipho africanus (strain TCF52B).